We begin with the raw amino-acid sequence, 178 residues long: Large ribosomal subunit protein uL6 (178 aa).

The protein belongs to the universal ribosomal protein uL6 family. As to quaternary structure, part of the 50S ribosomal subunit.

Functionally, this protein binds to the 23S rRNA, and is important in its secondary structure. It is located near the subunit interface in the base of the L7/L12 stalk, and near the tRNA binding site of the peptidyltransferase center. The sequence is that of Large ribosomal subunit protein uL6 from Streptococcus pneumoniae serotype 4 (strain ATCC BAA-334 / TIGR4).